A 397-amino-acid chain; its full sequence is Lysophospholipid transporter LplT (397 aa).

Over 1-17 the chain is Periplasmic; that stretch reads MSESVHTNTSLWSKGMK. A helical transmembrane segment spans residues 18 to 38; the sequence is AVIVAQFLSAFGDNALLFATL. Topologically, residues 39–52 are cytoplasmic; sequence ALLKAQFYPEWSQP. Residues 53-73 form a helical membrane-spanning segment; that stretch reads ILQMVFVGAYILFAPFVGQVA. Residues 74–90 lie on the Periplasmic side of the membrane; sequence DSFAKGRVMMFANGLKL. Residues 91 to 111 form a helical membrane-spanning segment; it reads LGAASICFGINPFLGYTLVGV. The Cytoplasmic portion of the chain corresponds to 112–144; sequence GAAAYSPAKYGILGELTTGSKLVKANGLMEAST. A helical transmembrane segment spans residues 145-165; the sequence is IAAILLGSVAGGVLADWHVLV. A topological domain (periplasmic) is located at residue Ala-166. A helical membrane pass occupies residues 167 to 187; sequence LAACALAYGGAVVANIYIPKL. Over 188-226 the chain is Cytoplasmic; that stretch reads AAARPGQSWNLINMTRSFLNACTSLWRNGETRFSLVGTS. The chain crosses the membrane as a helical span at residues 227-247; the sequence is LFWGAGVTLRFLLVLWVPVAL. At 248–256 the chain is on the periplasmic side; it reads GITDNATPT. Residues 257-277 form a helical membrane-spanning segment; it reads YLNAMVAIGIVVGAGAAAKLV. The Cytoplasmic portion of the chain corresponds to 278-280; it reads TLE. A helical membrane pass occupies residues 281–301; sequence TMSRCMPAGILIGVVVLIFSL. The Periplasmic segment spans residues 302–304; it reads QHE. Residues 305–325 form a helical membrane-spanning segment; it reads LLPAYALLMLIGVMGGFFVVP. Topologically, residues 326–343 are cytoplasmic; it reads LNALLQERGKKSVGAGNA. A helical membrane pass occupies residues 344 to 364; sequence IAVQNLGENSAMLLMLGIYSL. The Periplasmic portion of the chain corresponds to 365 to 366; sequence AV. The helical transmembrane segment at 367–387 threads the bilayer; sequence MVGIPVVPIGIGFGALFALAI. Topologically, residues 388–397 are cytoplasmic; that stretch reads TALWIWQRRH.

Belongs to the major facilitator superfamily. LplT (TC 2.A.1.42) family.

It is found in the cell inner membrane. Catalyzes the facilitated diffusion of 2-acyl-glycero-3-phosphoethanolamine (2-acyl-GPE) into the cell. The sequence is that of Lysophospholipid transporter LplT from Shigella sonnei (strain Ss046).